Reading from the N-terminus, the 490-residue chain is N-succinylglutamate 5-semialdehyde dehydrogenase (490 aa).

220–225 (GSANTG) lines the NAD(+) pocket. Catalysis depends on residues E243 and C277.

Belongs to the aldehyde dehydrogenase family. AstD subfamily.

It catalyses the reaction N-succinyl-L-glutamate 5-semialdehyde + NAD(+) + H2O = N-succinyl-L-glutamate + NADH + 2 H(+). It participates in amino-acid degradation; L-arginine degradation via AST pathway; L-glutamate and succinate from L-arginine: step 4/5. Catalyzes the NAD-dependent reduction of succinylglutamate semialdehyde into succinylglutamate. The chain is N-succinylglutamate 5-semialdehyde dehydrogenase from Shigella dysenteriae serotype 1 (strain Sd197).